A 76-amino-acid chain; its full sequence is Translational regulator CsrA (76 aa).

Belongs to the CsrA/RsmA family. As to quaternary structure, homodimer; the beta-strands of each monomer intercalate to form a hydrophobic core, while the alpha-helices form wings that extend away from the core.

It localises to the cytoplasm. A translational regulator that binds mRNA to regulate translation initiation and/or mRNA stability. Usually binds in the 5'-UTR at or near the Shine-Dalgarno sequence preventing ribosome-binding, thus repressing translation. Its main target seems to be the major flagellin gene, while its function is anatagonized by FliW. This Syntrophomonas wolfei subsp. wolfei (strain DSM 2245B / Goettingen) protein is Translational regulator CsrA.